The chain runs to 495 residues: Mesoderm induction early response protein 1 (495 aa).

Disordered stretches follow at residues 1–25 and 76–131; these read MAEPSLRTASPGGSAASDDHEFEPS and GSTV…PSFT. Over residues 83–94 the composition is skewed to acidic residues; it reads GEEEEDEEDMDN. A compositionally biased stretch (polar residues) spans 120-130; sequence QSSNDDPTPSF. The ELM2 domain occupies 171–269; that stretch reads KEIMVGSMFQ…EALRRLRFNV (99 aa). In terms of domain architecture, SANT spans 274-326; it reads EELSVWTEEECRNFEQGLKAYGKDFHLIQANKVRTRSVGECVAFYYMWKKSER. Disordered regions lie at residues 356 to 397 and 416 to 495; these read DESE…NGVS and HLNG…HGEV. Composition is skewed to polar residues over residues 387 to 397 and 420 to 440; these read TASNNTQNGVS and PTISSSDPSSNETDTNGYNRE. The segment covering 462-476 has biased composition (basic and acidic residues); sequence TNERPIKRQRMDSPG. Positions 477–489 are enriched in polar residues; the sequence is KESTGSSEFSQEV.

It is found in the nucleus. Transcriptional repressor regulating the expression of a number of genes. Probably functions through recruitment of histone deacetylases involved in chromatin silencing. The protein is Mesoderm induction early response protein 1 (mier1) of Xenopus laevis (African clawed frog).